The sequence spans 314 residues: Mitochondrial RNA-splicing protein MRS3 (314 aa).

Solcar repeat units lie at residues 31 to 118 (APLY…CKKN), 128 to 210 (HHPF…STKF), and 217 to 310 (YNPL…AKHF). 6 helical membrane passes run 33–52 (LYHQLIAGAFAGIMEHSVMF), 93–112 (GVQSVILGAGPAHAVYFGTY), 130–149 (PFKTAISGACATTASDALMN), 185–204 (SYPTTLVMNIPFAAFNFVIY), 219–238 (PLIHCLCGSISGSTCAAITT), and 285–298 (GWKPRIVANMPATA).

It belongs to the mitochondrial carrier (TC 2.A.29) family.

It localises to the mitochondrion inner membrane. MRS3 suppresses a mitochondrial splice defect in the first intron of the COB gene. It may act as a carrier, exerting its suppressor activity via modulation of solute concentrations in the mitochondrion (possibly of cations). The protein is Mitochondrial RNA-splicing protein MRS3 (MRS3) of Saccharomyces cerevisiae (strain ATCC 204508 / S288c) (Baker's yeast).